The sequence spans 504 residues: Cytochrome P450 monooxygenase braC (504 aa).

Residues 4-24 (LYLPTIWASTLTAATIFIVAV) form a helical membrane-spanning segment. Cys448 contributes to the heme binding site.

This sequence belongs to the cytochrome P450 family. Heme is required as a cofactor.

The protein localises to the membrane. Its pathway is secondary metabolite biosynthesis. Cytochrome P450 monooxygenase; part of the gene cluster that mediates the biosynthesis of the brasilane terpene glycosides brasilane D and E. The biosynthesis starts with the activity of the terpene cyclase braA that converts farnesyl pyrophosphate into the sesquiterpene alcohol trichobrasilenol. Subsequently, trichobrasilenol is glycosylated by the O-glycosyltransferase braB putatively using UDP-GlcNAc as sugar donor to yield brasilane A. The latter then undergoes two rounds of oxidation performed by the cytochrome P450 monooxygenase braC. In the first round braC hydroxylates C-12 forming brasilane D, which serves as substrate in the second round to establish the epoxide at the bond between C-5 and C-10 and oxidize the alcohol at C-12 to an aldehyde leading to the final product brasilane E. In Annulohypoxylon truncatum (Hypoxylon truncatum), this protein is Cytochrome P450 monooxygenase braC.